The sequence spans 618 residues: ELMO domain-containing protein C (618 aa).

The stretch at methionine 1–phenylalanine 72 forms a coiled coil. Disordered stretches follow at residues asparagine 153 to leucine 175 and threonine 245 to valine 276. 2 stretches are compositionally biased toward low complexity: residues asparagine 156–asparagine 171 and threonine 245–threonine 275. The region spanning aspartate 382–serine 545 is the ELMO domain. 2 stretches are compositionally biased toward low complexity: residues glutamine 574 to proline 592 and threonine 602 to asparagine 618. Positions glutamine 574–asparagine 618 are disordered.

The polypeptide is ELMO domain-containing protein C (elmoC) (Dictyostelium discoideum (Social amoeba)).